We begin with the raw amino-acid sequence, 510 residues long: Putative folylpolyglutamate synthase (510 aa).

98 to 101 contributes to the ATP binding site; that stretch reads GKGS. S122, E189, and H217 together coordinate Mg(2+). Residues R342 and D357 each contribute to the ATP site.

Belongs to the folylpolyglutamate synthase family. The cofactor is a monovalent cation.

The protein localises to the mitochondrion inner membrane. The protein resides in the mitochondrion matrix. It is found in the cytoplasm. It catalyses the reaction (6S)-5,6,7,8-tetrahydrofolyl-(gamma-L-Glu)(n) + L-glutamate + ATP = (6S)-5,6,7,8-tetrahydrofolyl-(gamma-L-Glu)(n+1) + ADP + phosphate + H(+). It participates in cofactor biosynthesis; tetrahydrofolylpolyglutamate biosynthesis. In terms of biological role, catalyzes conversion of folates to polyglutamate derivatives allowing concentration of folate compounds in the cell and the intracellular retention of these cofactors, which are important substrates for most of the folate-dependent enzymes that are involved in one-carbon transfer reactions involved in purine, pyrimidine and amino acid synthesis. The chain is Putative folylpolyglutamate synthase from Caenorhabditis elegans.